The sequence spans 146 residues: Snaclec stejaggregin-B subunit beta-1 (146 aa).

An N-terminal signal peptide occupies residues 1–23 (MGRFIFVSFGLLVVFLSLSGTGA). Cystine bridges form between Cys-25–Cys-36, Cys-53–Cys-142, and Cys-119–Cys-134. In terms of domain architecture, C-type lectin spans 32 to 143 (YDLYCYRVFQ…CSQTYPFVCK (112 aa)).

It belongs to the snaclec family. As to quaternary structure, heteromultimer; disulfide-linked. As to expression, expressed by the venom gland.

Its subcellular location is the secreted. Interferes with one step of hemostasis (modulation of platelet aggregation, or coagulation cascade, for example). The protein is Snaclec stejaggregin-B subunit beta-1 of Trimeresurus stejnegeri (Chinese green tree viper).